The sequence spans 478 residues: D-ribulose kinase (478 aa).

Residues 1–38 (MLILRQFQISSFELFQSPKQTGFYSSSRSVPLPRTRFY) constitute a chloroplast transit peptide. Residues Asp-60, 64–67 (SGGR), and Asp-278 each bind substrate. Residues Ser-300, Gly-338, and 433–437 (GGAKN) contribute to the ATP site.

It belongs to the FGGY kinase family. A divalent metal cation is required as a cofactor.

It is found in the plastid. The protein localises to the chloroplast. The catalysed reaction is D-ribulose + ATP = D-ribulose 5-phosphate + ADP + H(+). In terms of biological role, exhibits ATP hydrolysis without substrate. Can phosphorylate D-ribulose with low efficiency. This chain is D-ribulose kinase, found in Arabidopsis thaliana (Mouse-ear cress).